The following is a 314-amino-acid chain: Methionyl-tRNA formyltransferase (314 aa).

110–113 (SLLP) is a binding site for (6S)-5,6,7,8-tetrahydrofolate.

The protein belongs to the Fmt family.

The catalysed reaction is L-methionyl-tRNA(fMet) + (6R)-10-formyltetrahydrofolate = N-formyl-L-methionyl-tRNA(fMet) + (6S)-5,6,7,8-tetrahydrofolate + H(+). In terms of biological role, attaches a formyl group to the free amino group of methionyl-tRNA(fMet). The formyl group appears to play a dual role in the initiator identity of N-formylmethionyl-tRNA by promoting its recognition by IF2 and preventing the misappropriation of this tRNA by the elongation apparatus. This chain is Methionyl-tRNA formyltransferase, found in Bacillus thuringiensis subsp. konkukian (strain 97-27).